We begin with the raw amino-acid sequence, 689 residues long: Chloride channel protein ClC-Kb (689 aa).

The Cytoplasmic segment spans residues 1–51 (MSRVLVIEQREGEEKTLIQKHIFRPFPNTRRVVIDHLQRLKNFLFRIGDDW). 2 helical membrane passes run 52–83 (YFLF…RWLQ) and 92–112 (LRYL…TGFA). An intramembrane region (helical) is located at residues 117–128 (PHSGGSGIPELK). Residue S122 coordinates chloride. 2 consecutive transmembrane segments (helical) span residues 142–161 (IKNF…AGST) and 162–181 (MFLG…AAYL). N194 is a glycosylation site (N-linked (GlcNAc...) asparagine). An intramembrane region (helical) is located at residues 204–225 (AAAAVGVSTVFGAPISGVLFSV). Residues 237 to 256 (YWRGFFAATCGAFVFRLLAV) traverse the membrane as a helical segment. Ca(2+) contacts are provided by E260, E262, D279, and E282. 2 consecutive transmembrane segments (helical) span residues 283 to 311 (MFFF…LGYV) and 326 to 343 (PMYS…TFPE). The segment at residues 350 to 361 (ASRLTMKELLTS) is an intramembrane region (helical). A run of 2 helical transmembrane segments spans residues 402-422 (GTLA…TTLP) and 423-442 (MPAG…GRLV). F428 contacts chloride. The helical intramembrane region spans 466–498 (GGYAWQGAPAYSGAVTHSVSTALLAFEATGQIA). The helical transmembrane segment at 502 to 522 (PVILCVLIANAFTQKLQPSFY) threads the bilayer. Residues 523–689 (DGTIIVKKLP…KAIEDLANPK (167 aa)) lie on the Cytoplasmic side of the membrane. CBS domains follow at residues 553 to 613 (MNPD…SHER) and 630 to 689 (ACSI…ANPK).

Belongs to the chloride channel (TC 2.A.49) family. In terms of processing, N-glycosylated on a single asparagine, probably Asn-365 or Asn-375. Expressed in two distinct regions of the kidney; the proximal convoluted tubule and the diluting segment.

The protein resides in the cell membrane. Its function is as follows. Voltage-gated chloride channel. Chloride channels have several functions including the regulation of cell volume, the stabilization of membrane potential, signal transduction and transepithelial transport. The protein is Chloride channel protein ClC-Kb (clcnkb) of Xenopus laevis (African clawed frog).